Here is a 418-residue protein sequence, read N- to C-terminus: Magnesium transporter MRS2-E (418 aa).

The disordered stretch occupies residues 119–146 (DAAPSTNPAAADRGNGTEQGDQGSVPGL). Positions 166-232 (VCLEHACKDL…RDELEHLLDD (67 aa)) form a coiled coil. Residues 258 to 268 (DSHKYASVDHD) are compositionally biased toward basic and acidic residues. Positions 258–287 (DSHKYASVDHDDDREEEDHDDETESGRESS) are disordered. Over residues 269–280 (DDREEEDHDDET) the composition is skewed to acidic residues. Residues 344–364 (GVMLTTATVVVTAGIVVVSLF) form a helical membrane-spanning segment. A Required for magnesium transport activity motif is present at residues 365–367 (GMN). Residues 389 to 409 (FWETTFGTVAGCIAIYLLAIY) traverse the membrane as a helical segment.

This sequence belongs to the CorA metal ion transporter (MIT) (TC 1.A.35.5) family.

The protein localises to the membrane. Magnesium transporter that may mediate the influx of magnesium. In Oryza sativa subsp. indica (Rice), this protein is Magnesium transporter MRS2-E (MRS2-E).